The following is a 327-amino-acid chain: Malate dehydrogenase (327 aa).

Residues 20 to 25 (GAGRVG) and Asp-44 each bind NAD(+). The substrate site is built by Arg-93 and Arg-99. NAD(+)-binding positions include Asn-106 and 129–131 (VTN). The substrate site is built by Asn-131 and Arg-162. The active-site Proton acceptor is His-186.

This sequence belongs to the LDH/MDH superfamily. MDH type 3 family.

The enzyme catalyses (S)-malate + NAD(+) = oxaloacetate + NADH + H(+). In terms of biological role, catalyzes the reversible oxidation of malate to oxaloacetate. This Nostoc punctiforme (strain ATCC 29133 / PCC 73102) protein is Malate dehydrogenase.